The following is a 420-amino-acid chain: Putative transporter AmpG 3 (420 aa).

12 helical membrane-spanning segments follow: residues 6–26 (YLIG…LIFF), 41–61 (IVGS…WSPF), 79–99 (GWAL…LKRS), 104–124 (LCIT…QDIV), 141–161 (IAFT…SVGA), 166–186 (IIFG…VGPI), 230–250 (LLLI…PMAM), 274–294 (LLIM…IGIF), 297–317 (VLIG…LATI), 324–344 (FIIT…IISI), 359–381 (YSIS…GICA), and 386–406 (WPVF…IFYI).

It belongs to the major facilitator superfamily.

The protein resides in the cell inner membrane. The sequence is that of Putative transporter AmpG 3 (ampG3) from Rickettsia typhi (strain ATCC VR-144 / Wilmington).